An 868-amino-acid polypeptide reads, in one-letter code: Rifampicin phosphotransferase (868 aa).

The interval Thr5 to Thr317 is ATP-binding. ATP is bound by residues Lys26, Arg120, Gly135, Thr139, Gln186, Glu300, Gln312, and Arg314. The interval Asn330–Ala755 is rifampicin-binding. Residues Phe410–Pro430 form a disordered region. The interval Gly768–Ile866 is swivel phosphohistidine. The Tele-phosphohistidine intermediate role is filled by His826.

It belongs to the rifampicin phosphotransferase family.

It catalyses the reaction rifampicin + ATP + H2O = 21-phosphorifampicin + AMP + phosphate + 2 H(+). In terms of biological role, catalyzes the phosphorylation of rifampicin, also known as rifampin (RIF), leading to its inactivation. Confers high level resistance to a variety of clinically used rifamycin antibiotics. Does not show phosphoenolpyruvate (PEP) synthase activity. This Streptomyces sviceus (strain ATCC 29083 / DSM 924 / JCM 4929 / NBRC 13980 / NCIMB 11184 / NRRL 5439 / UC 5370) protein is Rifampicin phosphotransferase.